Reading from the N-terminus, the 64-residue chain is SPbeta prophage-derived uncharacterized protein YosJ (64 aa).

The sequence is that of SPbeta prophage-derived uncharacterized protein YosJ (yosJ) from Bacillus subtilis (strain 168).